The sequence spans 81 residues: Putative membrane protein insertion efficiency factor (81 aa).

Residues Pro59 to Glu81 are disordered.

This sequence belongs to the UPF0161 family.

The protein resides in the cell inner membrane. Could be involved in insertion of integral membrane proteins into the membrane. The sequence is that of Putative membrane protein insertion efficiency factor from Azotobacter vinelandii (strain DJ / ATCC BAA-1303).